Consider the following 380-residue polypeptide: MIDFPIKYRLIKKEKYTGARLGEIITPHGTFPTPMFMPVGTQATVKTQSPEELKQMGSGIILANTYHLWLRPGDELIAKAGGLHKFMNWDQAILTDSGGFQVYSLAEKRDISEEGVTFKNHLNGSKMFLSPEKAISVQNNLGSDIMMSFDECPQFYQPYDYVKKSIERTSRWAERGLKAHRRPHDQGLFGIVQGAGFEDLRRQSSHDLVSMDFPGYSIGGLAVGETHEEMNAVLDFTVPLLPENKPRYLMGVGAPDSLIDGVIRGVDMYDCVLPTRIARNGTCMTSNGRLVVKNAAYAEDFSPIDPECDCYTCKNYTRAYVRHLLKADETFGIRLTSYHNLYFLVNLMAKVRQAIVDDNLLEFRQDFIEKYGYNASNRNF.

The active-site Proton acceptor is the D96. Substrate contacts are provided by residues 96–100 (DSGGF), D150, Q193, and G220. Residues 251–257 (GVGAPDS) are RNA binding. The active-site Nucleophile is D270. An RNA binding; important for wobble base 34 recognition region spans residues 275–279 (TRIAR). The Zn(2+) site is built by C308, C310, C313, and H339.

The protein belongs to the queuine tRNA-ribosyltransferase family. Homodimer. Within each dimer, one monomer is responsible for RNA recognition and catalysis, while the other monomer binds to the replacement base PreQ1. The cofactor is Zn(2+).

The enzyme catalyses 7-aminomethyl-7-carbaguanine + guanosine(34) in tRNA = 7-aminomethyl-7-carbaguanosine(34) in tRNA + guanine. It functions in the pathway tRNA modification; tRNA-queuosine biosynthesis. Its function is as follows. Catalyzes the base-exchange of a guanine (G) residue with the queuine precursor 7-aminomethyl-7-deazaguanine (PreQ1) at position 34 (anticodon wobble position) in tRNAs with GU(N) anticodons (tRNA-Asp, -Asn, -His and -Tyr). Catalysis occurs through a double-displacement mechanism. The nucleophile active site attacks the C1' of nucleotide 34 to detach the guanine base from the RNA, forming a covalent enzyme-RNA intermediate. The proton acceptor active site deprotonates the incoming PreQ1, allowing a nucleophilic attack on the C1' of the ribose to form the product. After dissociation, two additional enzymatic reactions on the tRNA convert PreQ1 to queuine (Q), resulting in the hypermodified nucleoside queuosine (7-(((4,5-cis-dihydroxy-2-cyclopenten-1-yl)amino)methyl)-7-deazaguanosine). In Streptococcus thermophilus (strain ATCC BAA-491 / LMD-9), this protein is Queuine tRNA-ribosyltransferase.